A 439-amino-acid polypeptide reads, in one-letter code: 3beta-hydroxysteroid-dehydrogenase/decarboxylase isoform 1 (439 aa).

16 to 21 provides a ligand contact to NAD(+); the sequence is GGRGFA. Asn75 and Asn158 each carry an N-linked (GlcNAc...) asparagine glycan. 2 residues coordinate NAD(+): Tyr161 and Lys165. Lys165 serves as the catalytic Proton donor. A glycan (N-linked (GlcNAc...) asparagine) is linked at Asn327. The 69-residue stretch at 371-439 folds into the Reticulon; atypical domain; that stretch reads VTETIQWKKQ…MKVFGSKKID (69 aa). 2 consecutive transmembrane segments (helical) span residues 381–401 and 405–425; these read TLIA…TTGS and IITA…INGI.

Belongs to the 3-beta-HSD family.

It localises to the endoplasmic reticulum membrane. The enzyme catalyses a 3beta-hydroxysteroid-4alpha-carboxylate + NAD(+) = a 3-oxosteroid + CO2 + NADH. It carries out the reaction 4alpha-carboxy-4beta,14alpha-dimethyl-9beta,19-cyclo-5alpha-ergost-24(24(1))-en-3beta-ol + NAD(+) = cycloeucalenone + CO2 + NADH. It functions in the pathway steroid biosynthesis; zymosterol biosynthesis; zymosterol from lanosterol: step 4/6. In terms of biological role, 3beta-hydroxysteroid-dehydrogenase/decarboxylase involved in sterol synthesis. Catalyzes the formation of 3-oxosteroids from 3beta-hydroxysteroids-4alpha-carboxylate. Involved in the regulation of inflorescence internodes and leaves growth, probably by affecting auxin transporter activity possibly by altering sterol composition in the membranes. The polypeptide is 3beta-hydroxysteroid-dehydrogenase/decarboxylase isoform 1 (Arabidopsis thaliana (Mouse-ear cress)).